The following is a 444-amino-acid chain: Glutamate-1-semialdehyde 2,1-aminomutase (444 aa).

The residue at position 267 (Lys-267) is an N6-(pyridoxal phosphate)lysine.

The protein belongs to the class-III pyridoxal-phosphate-dependent aminotransferase family. HemL subfamily. Homodimer. Requires pyridoxal 5'-phosphate as cofactor.

The protein resides in the cytoplasm. It carries out the reaction (S)-4-amino-5-oxopentanoate = 5-aminolevulinate. It participates in porphyrin-containing compound metabolism; protoporphyrin-IX biosynthesis; 5-aminolevulinate from L-glutamyl-tRNA(Glu): step 2/2. The chain is Glutamate-1-semialdehyde 2,1-aminomutase from Xylella fastidiosa (strain Temecula1 / ATCC 700964).